Here is an 815-residue protein sequence, read N- to C-terminus: Heme-copper oxidase subunit I+III (815 aa).

The tract at residues 1-467 (MVSRLRGFLA…QLSTLGAFIF (467 aa)) is COX1. Residues 26 to 46 (LLYLVTSIAFLLIAGSLALLF) traverse the membrane as a helical segment. A Fe(II)-heme a-binding site is contributed by His-70. 18 helical membrane-spanning segments follow: residues 71–91 (GLIM…NYIV), 105–125 (LNAL…ASFF), 157–177 (LAIF…LVTI), 197–217 (ILFT…GGAL), 242–262 (LFWF…LGAM), 281–301 (LTAF…HMFI), 314–334 (ITTI…IFTL), 339–359 (LVYT…IIGG), 380–400 (VVAH…IAGL), 419–439 (IHFA…FALM), 463–483 (GAFI…YSLV), 580–600 (ALFG…VFLL), 637–657 (WVFI…YFFI), 683–703 (LINT…YLGV), 708–728 (YLIT…FLTV), 736–756 (LLIA…YVTT), 758–778 (AHAL…VKLF), and 791–811 (VLAV…VFPL). Cu cation is bound by residues His-248, Tyr-252, His-297, and His-298. A cross-link (1'-histidyl-3'-tyrosine (His-Tyr)) is located at residues 248–252 (HPEVY). His-383 contacts heme a3. Residue His-385 participates in Fe(II)-heme a binding. The interval 545-815 (DVSNVPLSGG…TLVFPLYYLV (271 aa)) is COX3.

The protein in the N-terminal section; belongs to the heme-copper respiratory oxidase family. This sequence in the C-terminal section; belongs to the cytochrome c oxidase subunit 3 family. Heme serves as cofactor. The cofactor is Cu cation.

The protein resides in the cell membrane. The sequence is that of Heme-copper oxidase subunit I+III (aoxB) from Aeropyrum pernix (strain ATCC 700893 / DSM 11879 / JCM 9820 / NBRC 100138 / K1).